Here is a 150-residue protein sequence, read N- to C-terminus: Large ribosomal subunit protein eL19 (150 aa).

Residues 56 to 89 are disordered; that stretch reads KGQSRARARAFQEARKKGRHRGPGSKKGKKTARM. Basic residues predominate over residues 71-89; that stretch reads KKGRHRGPGSKKGKKTARM.

It belongs to the eukaryotic ribosomal protein eL19 family. As to quaternary structure, part of the 50S ribosomal subunit.

Functionally, binds to the 23S rRNA. The protein is Large ribosomal subunit protein eL19 of Thermococcus kodakarensis (strain ATCC BAA-918 / JCM 12380 / KOD1) (Pyrococcus kodakaraensis (strain KOD1)).